We begin with the raw amino-acid sequence, 685 residues long: Protein SPT2 homolog (685 aa).

The tract at residues 1–570 is important for interaction with DNA; it reads MDFREILMIA…PPLSGYRAAQ (570 aa). Residue Lys-37 forms a Glycyl lysine isopeptide (Lys-Gly) (interchain with G-Cter in SUMO2) linkage. The stretch at 45-81 forms a coiled coil; sequence QAFLKRKEEELRRKALEEKRRKEELVKKRIELKHDKK. The interval 79 to 168 is disordered; sequence DKKARAMAKR…PLKSAPPPMN (90 aa). A compositionally biased stretch (basic and acidic residues) spans 101–111; the sequence is IEEKSKKRQAT. The stretch at 123–148 forms a coiled coil; it reads YEMEEENEFLEYNHAESEQEYEEEQE. Lys-187 is covalently cross-linked (Glycyl lysine isopeptide (Lys-Gly) (interchain with G-Cter in SUMO2)). Basic and acidic residues-rich tracts occupy residues 188 to 209 and 260 to 275; these read VVKK…EFLE and HAEK…EKHL. Disordered regions lie at residues 188 to 615 and 644 to 685; these read VVKK…QEEI and SWKE…LKRR. Ser-278 carries the phosphoserine modification. 3 stretches are compositionally biased toward low complexity: residues 317-330, 365-385, and 402-415; these read SSTS…TSAS, SPGV…PSTG, and GSSS…ISGS. Residues 416–431 are compositionally biased toward polar residues; that stretch reads KKPTNDSNPSRRTVSG. Positions 435-501 are enriched in low complexity; it reads PGQPASSSGG…PGRSISGSIP (67 aa). Ser-471 bears the Phosphoserine mark. A compositionally biased stretch (polar residues) spans 519 to 529; the sequence is GPGQTVSSSGP. Residues 542–553 show a composition bias toward low complexity; sequence ISSKNIISRSSN. The segment at 571–685 is important for interaction with histones; the sequence is GPQRLPFPTG…RRRAKKLKRR (115 aa). Lys-582 carries the N6-acetyllysine modification. Positions 587–613 are enriched in acidic residues; it reads YEEEDDDDDEYDSEMEDFIEDEGEPQE. Phosphoserine is present on Ser-599. Basic and acidic residues-rich tracts occupy residues 644-655 and 666-676; these read SWKEQQKEEAKS and EMRREEEEMQR. Residues 645–685 are a coiled coil; it reads WKEQQKEEAKSLRLGMQEDLEEMRREEEEMQRRRAKKLKRR.

This sequence belongs to the SPT2 family. As to quaternary structure, interacts with histones. Interacts with a heterotetrameric complex formed by histone H3 and H4, especially when the histone tetramer is not bound to DNA. Interacts with histone H3.3.

The protein localises to the nucleus. It is found in the nucleolus. Its function is as follows. Histone chaperone that stabilizes pre-existing histone tetramers and regulates replication-independent histone exchange on chromatin. Required for normal chromatin refolding in the coding region of transcribed genes, and for the suppression of spurious transcription. Binds DNA and histones and promotes nucleosome assembly (in vitro). Facilitates formation of tetrameric histone complexes containing histone H3 and H4. Modulates RNA polymerase 1-mediated transcription. Binds DNA, with a preference for branched DNA species, such as Y-form DNA and Holliday junction DNA. This chain is Protein SPT2 homolog (SPTY2D1), found in Homo sapiens (Human).